A 287-amino-acid polypeptide reads, in one-letter code: Probable 18S rRNA (guanine-N(7))-methyltransferase (287 aa).

The tract at residues 214–287 (GVEGEEYEQQ…FSGRKRGPKF (74 aa)) is disordered. Positions 217–228 (GEEYEQQEEEDS) are enriched in acidic residues. Over residues 234–245 (SNRKRDRRRVTK) the composition is skewed to basic residues. The segment covering 253 to 278 (KTKEWIMNKKDRQRKQGREIKNDSKF) has biased composition (basic and acidic residues).

This sequence belongs to the class I-like SAM-binding methyltransferase superfamily. BUD23/WBSCR22 family.

It localises to the nucleus. The protein resides in the nucleoplasm. It is found in the cytoplasm. Its subcellular location is the perinuclear region. The enzyme catalyses a guanosine in 18S rRNA + S-adenosyl-L-methionine = an N(7)-methylguanosine in 18S rRNA + S-adenosyl-L-homocysteine. Functionally, S-adenosyl-L-methionine-dependent methyltransferase that specifically methylates the N(7) position of a guanine in 18S rRNA. Important for biogenesis end export of the 40S ribosomal subunit independent on its methyltransferase activity. S-adenosyl-L-methionine-dependent methyltransferase that specifically methylates the N(7) position of a guanine in 18S rRNA. Requires the methyltransferase adapter protein TRM112 for full rRNA methyltransferase activity. Involved in the pre-rRNA processing steps leading to small-subunit rRNA production independently of its RNA-modifying catalytic activity. Important for biogenesis end export of the 40S ribosomal subunit independent on its methyltransferase activity. The chain is Probable 18S rRNA (guanine-N(7))-methyltransferase from Dictyostelium discoideum (Social amoeba).